A 230-amino-acid chain; its full sequence is Large ribosomal subunit protein uL1 (230 aa).

The protein belongs to the universal ribosomal protein uL1 family. Part of the 50S ribosomal subunit.

Its function is as follows. Binds directly to 23S rRNA. The L1 stalk is quite mobile in the ribosome, and is involved in E site tRNA release. In terms of biological role, protein L1 is also a translational repressor protein, it controls the translation of the L11 operon by binding to its mRNA. The protein is Large ribosomal subunit protein uL1 of Acidiphilium cryptum (strain JF-5).